We begin with the raw amino-acid sequence, 510 residues long: NAD(P) transhydrogenase subunit alpha (510 aa).

Topologically, residues 1–401 are cytoplasmic; the sequence is MRIGIPRERL…EEKCTCSPWR (401 aa). NAD(+) is bound by residues 120–122, Val175, 195–197, Glu238, and Leu257; these read RIS and DTR. 2 helical membrane-spanning segments follow: residues 402-422 and 423-443; these read KYALMALAIILFGWMASVAPK and EFLGHFTVFALACVVGYYVVW. Residues 444 to 452 lie on the Cytoplasmic side of the membrane; sequence NVSHALHTP. The helical transmembrane segment at 453–473 threads the bilayer; the sequence is LMSVTNAISGIIVVGALLQIG. Topologically, residues 474 to 476 are periplasmic; the sequence is QGG. Residues 477–497 traverse the membrane as a helical segment; that stretch reads WVSFLSFIAVLIASINIFGGF. At 498–510 the chain is on the cytoplasmic side; sequence TVTQRMLKMFRKN.

Belongs to the AlaDH/PNT family. Heterodimer of an alpha (PntA) and a beta (PntB) chain. Alpha subunit serves as the dimerization unit.

The protein localises to the cell inner membrane. It catalyses the reaction NAD(+) + NADPH + H(+)(in) = NADH + NADP(+) + H(+)(out). Its function is as follows. The transhydrogenation between NADH and NADP is coupled to respiration and ATP hydrolysis and functions as a proton pump across the membrane. The protein is NAD(P) transhydrogenase subunit alpha (pntA) of Escherichia coli (strain K12).